The sequence spans 168 residues: MALLPILEFPDARLRTVAKPVEQVDERVRAIIDDMFETMYDAPGIGLAATQVNVHEQIIVIDISENHDEPLVFINPRIDVLDETLFDYEEGCLSVPGFYEEVTRPRHVRVTALNRDGEEFVLEPEGLLAVCIQHEIDHLKGKLFVDYVSNIKRQRIRKKLEKQHKERA.

Residues C92 and H134 each coordinate Fe cation. E135 is a catalytic residue. H138 contacts Fe cation.

This sequence belongs to the polypeptide deformylase family. Fe(2+) is required as a cofactor.

It catalyses the reaction N-terminal N-formyl-L-methionyl-[peptide] + H2O = N-terminal L-methionyl-[peptide] + formate. Its function is as follows. Removes the formyl group from the N-terminal Met of newly synthesized proteins. Requires at least a dipeptide for an efficient rate of reaction. N-terminal L-methionine is a prerequisite for activity but the enzyme has broad specificity at other positions. This is Peptide deformylase from Teredinibacter turnerae (strain ATCC 39867 / T7901).